The primary structure comprises 510 residues: ATP synthase subunit alpha (510 aa).

Glycine 169–threonine 176 is an ATP binding site.

This sequence belongs to the ATPase alpha/beta chains family. F-type ATPases have 2 components, CF(1) - the catalytic core - and CF(0) - the membrane proton channel. CF(1) has five subunits: alpha(3), beta(3), gamma(1), delta(1), epsilon(1). CF(0) has three main subunits: a(1), b(2) and c(9-12). The alpha and beta chains form an alternating ring which encloses part of the gamma chain. CF(1) is attached to CF(0) by a central stalk formed by the gamma and epsilon chains, while a peripheral stalk is formed by the delta and b chains.

It localises to the cell membrane. The enzyme catalyses ATP + H2O + 4 H(+)(in) = ADP + phosphate + 5 H(+)(out). Functionally, produces ATP from ADP in the presence of a proton gradient across the membrane. The alpha chain is a regulatory subunit. The polypeptide is ATP synthase subunit alpha (Buchnera aphidicola subsp. Schizaphis graminum (strain Sg)).